A 347-amino-acid polypeptide reads, in one-letter code: 5-deoxyribose 1-phosphate isomerase (347 aa).

Residues arginine 48–alanine 50, arginine 91, and glutamine 198 each bind substrate. The active-site Proton donor is aspartate 239. Residue asparagine 249–lysine 250 participates in substrate binding.

The protein belongs to the EIF-2B alpha/beta/delta subunits family. DrdI subfamily.

The catalysed reaction is 5-deoxy-alpha-D-ribose 1-phosphate = 5-deoxy-D-ribulose 1-phosphate. The protein operates within carbohydrate degradation. In terms of biological role, catalyzes the isomerization of 5-deoxy-alpha-D-ribose 1-phosphate to 5-deoxy-D-ribulose 1-phosphate, as part of a 5-deoxyribose salvage pathway that recycles this toxic radical SAM enzyme by-product to mainstream metabolites. The chain is 5-deoxyribose 1-phosphate isomerase from Bacillus thuringiensis subsp. konkukian (strain 97-27).